The primary structure comprises 86 residues: Triple QxxK/R motif-containing protein (86 aa).

Residues 51-71 form a helical membrane-spanning segment; sequence VGLVLAAILALLLAFYAFFYL.

It belongs to the TRIQK family.

The protein localises to the endoplasmic reticulum membrane. In terms of biological role, may play a role in cell growth and maintenance of cell morphology. The chain is Triple QxxK/R motif-containing protein (TRIQK) from Homo sapiens (Human).